Here is a 528-residue protein sequence, read N- to C-terminus: Proteinaceous RNase P 2 (528 aa).

Positions 1–16 are enriched in basic and acidic residues; sequence MAASDQHRSRRHDESS. Residues 1-28 form a disordered region; the sequence is MAASDQHRSRRHDESSSRPNKKKKVSRN. PPR repeat units follow at residues 29 to 64, 72 to 107, 108 to 142, and 145 to 179; these read PETN…EVRL, LLYL…GISP, NEAS…GGVS, and RLRT…GIAL. Residues 275–511 enclose the PRORP domain; it reads VSSTGRCLSC…NEESSRTWMC (237 aa). Cys-281 and Cys-284 together coordinate Zn(2+). Asp-343, Asp-421, Asp-422, and Asp-440 together coordinate Mg(2+). Zn(2+) contacts are provided by His-494 and Cys-511.

It belongs to the PPR family. P subfamily. Monomer; forms dimers in crystallo but monomers in solution. Mg(2+) is required as a cofactor.

Its subcellular location is the nucleus. It catalyses the reaction Endonucleolytic cleavage of RNA, removing 5'-extranucleotides from tRNA precursor.. Its function is as follows. Endonuclease RNase P responsible for the 5' maturation of tRNA precursors. Preferentially binds precursor tRNAs containing short 5' leaders and 3' trailers. Also involved in the maturation of mRNA and small nucleolar RNA (snoRNA). This Arabidopsis thaliana (Mouse-ear cress) protein is Proteinaceous RNase P 2 (PRORP2).